Reading from the N-terminus, the 494-residue chain is Putative bifunctional dihydrofolate reductase-thymidylate synthase (494 aa).

In terms of domain architecture, DHFR spans 1 to 167 (MGIGKDGTLP…IKHSFISFVR (167 aa)). Residue 2–8 (GIGKDGT) coordinates NADP(+). A substrate-binding site is contributed by D16. NADP(+) is bound by residues 40-42 (RKT) and 61-64 (LTRS). I103 contacts substrate. 104 to 111 (GGGEILRQ) lines the NADP(+) pocket. T124 lines the substrate pocket. The thymidylate synthase stretch occupies residues 170–494 (KSIAEANDSS…HHKIEMKMAV (325 aa)). Residue R231 participates in dUMP binding. C376 is a catalytic residue. DUMP is bound by residues H377, 395–399 (QRSAD), N407, and 437–439 (HVY).

In the N-terminal section; belongs to the dihydrofolate reductase family. It in the C-terminal section; belongs to the thymidylate synthase family.

The enzyme catalyses (6S)-5,6,7,8-tetrahydrofolate + NADP(+) = 7,8-dihydrofolate + NADPH + H(+). The catalysed reaction is dUMP + (6R)-5,10-methylene-5,6,7,8-tetrahydrofolate = 7,8-dihydrofolate + dTMP. The protein operates within cofactor biosynthesis; tetrahydrofolate biosynthesis; 5,6,7,8-tetrahydrofolate from 7,8-dihydrofolate: step 1/1. Functionally, bifunctional enzyme. Involved in de novo dTMP biosynthesis. Key enzyme in folate metabolism. Can play two different roles depending on the source of dihydrofolate: de novo synthesis of tetrahydrofolate or recycling of the dihydrofolate released as one of the end products of the TS catalyzed reaction. Catalyzes an essential reaction for de novo glycine and purine synthesis, DNA precursor synthesis, and for the conversion of dUMP to dTMP. In Oryza sativa subsp. japonica (Rice), this protein is Putative bifunctional dihydrofolate reductase-thymidylate synthase.